Reading from the N-terminus, the 195-residue chain is MTNYKKSKYSRDDRKHIAESIENLKNDEDYVAIFEILMDDESNSYTENSNGVFLNLSTVSDTTLDRISKYLNKINTQKNKHIEVDTDIIPTLINNKNERTYKLSNYEKNIIKQRNLRKAVDDDVDYEEFRFSNKKNIKSVKPNKLIETINTNRTNNTDNKSTKSKKQTETKKSLRTNKIVKQPINKSKKNIREEY.

A disordered region spans residues 143 to 195 (NKLIETINTNRTNNTDNKSTKSKKQTETKKSLRTNKIVKQPINKSKKNIREEY). Over residues 148–159 (TINTNRTNNTDN) the composition is skewed to low complexity.

This is an uncharacterized protein from Acanthamoeba polyphaga (Amoeba).